The primary structure comprises 687 residues: Ribosomal RNA processing protein 1 homolog (687 aa).

Positions 288–298 are enriched in acidic residues; that stretch reads DEEDDEVNAEE. Disordered stretches follow at residues 288 to 312 and 463 to 624; these read DEED…RAGN and VKEA…GSGK. Basic and acidic residues-rich tracts occupy residues 463-488, 497-520, and 527-543; these read VKEA…DQTK, PKND…EEPA, and HSKT…DEQP. Residues 554 to 564 show a composition bias toward low complexity; the sequence is KAKPTPKTKAA. Polar residues predominate over residues 596 to 608; it reads KQANSKLPQSTPK. T617 and T620 each carry phosphothreonine. S622 bears the Phosphoserine mark.

The protein belongs to the RRP1 family.

It is found in the nucleus. May be involved in the generation of 28S rRNA. In Drosophila melanogaster (Fruit fly), this protein is Ribosomal RNA processing protein 1 homolog (Nnp-1).